Reading from the N-terminus, the 248-residue chain is Large ribosomal subunit protein uL4 (248 aa).

2 disordered regions span residues 72–103 and 173–210; these read RSENVARRVPNAVSGRAAHPPKAEKDQTKSLN and GRSVRAGRGKTRGRKYSQPKSVLVVTSEEPSRAARNLS. Over residues 92–103 the composition is skewed to basic and acidic residues; sequence PKAEKDQTKSLN. Residues 177-189 show a composition bias toward basic residues; it reads RAGRGKTRGRKYS.

This sequence belongs to the universal ribosomal protein uL4 family. Part of the 50S ribosomal subunit.

In terms of biological role, one of the primary rRNA binding proteins, this protein initially binds near the 5'-end of the 23S rRNA. It is important during the early stages of 50S assembly. It makes multiple contacts with different domains of the 23S rRNA in the assembled 50S subunit and ribosome. Forms part of the polypeptide exit tunnel. In Halorubrum lacusprofundi (strain ATCC 49239 / DSM 5036 / JCM 8891 / ACAM 34), this protein is Large ribosomal subunit protein uL4.